Here is a 1059-residue protein sequence, read N- to C-terminus: RNA-binding protein 26 (1059 aa).

Basic and acidic residues-rich tracts occupy residues 98–114 (EKEI…EKEK) and 130–147 (RHKD…DRES). The tract at residues 98–275 (EKEIKKDEVN…PVDNSYASGS (178 aa)) is disordered. A compositionally biased stretch (polar residues) spans 172 to 182 (LNSNKVQNAKN). Basic and acidic residues predominate over residues 184–213 (RSRDDRKRDDRFRKREYDRNVPRRDSYRDR). Positions 214 to 231 (YNRRRGRSRSYSRSRSRS) are enriched in basic residues. The span at 232–266 (WSKERQRDRDRSRSRTRSRDKDSGKPKFDLDRPDP) shows a compositional bias: basic and acidic residues. The C3H1-type zinc-finger motif lies at 327–355 (QMQKKRCRDYDEKGFCMRGDMCPFDHGSD). Residues 375–428 (PVLEGPPPPGLPPPPSLLTPPPVNLQPPPVPPPGPLPPSLPPVTGPPPPLPPLQ) are compositionally biased toward pro residues. The tract at residues 375-443 (PVLEGPPPPG…APPNSATSSV (69 aa)) is disordered. A compositionally biased stretch (low complexity) spans 434 to 443 (APPNSATSSV). In terms of domain architecture, RRM 1 spans 581–655 (TKLELRRIPP…RFIRMYWHRE (75 aa)). Residues 771–873 (GDAQKKKQEA…LLDTELDLYN (103 aa)) adopt a coiled-coil conformation. An RRM 2 domain is found at 942–1011 (RALKISGFTE…QDLKLAWNKP (70 aa)). The tract at residues 1010–1059 (KPVPNASSTEVEDADQEEEEFHEDSIVDDSLLQDDDEEEEDDNESRSWRR) is disordered. Composition is skewed to acidic residues over residues 1019–1031 (EVED…EEFH) and 1040–1052 (LLQD…EDDN).

Functionally, may be involved in the turnover of nuclear polyadenylated (pA+) RNA. In Xenopus laevis (African clawed frog), this protein is RNA-binding protein 26.